We begin with the raw amino-acid sequence, 202 residues long: Inner membrane-spanning protein YciB (202 aa).

6 helical membrane passes run phenylalanine 3–alanine 23, isoleucine 46–leucine 66, methionine 74–asparagine 94, tryptophan 100–phenylalanine 120, leucine 145–tyrosine 165, and phenylalanine 173–leucine 193.

It belongs to the YciB family.

It is found in the cell inner membrane. Functionally, plays a role in cell envelope biogenesis, maintenance of cell envelope integrity and membrane homeostasis. The sequence is that of Inner membrane-spanning protein YciB from Azoarcus sp. (strain BH72).